The primary structure comprises 196 residues: ATP-dependent Clp protease proteolytic subunit (196 aa).

Ser101 acts as the Nucleophile in catalysis. His126 is a catalytic residue.

It belongs to the peptidase S14 family. In terms of assembly, component of the chloroplastic Clp protease core complex.

It localises to the plastid. The protein resides in the chloroplast stroma. The enzyme catalyses Hydrolysis of proteins to small peptides in the presence of ATP and magnesium. alpha-casein is the usual test substrate. In the absence of ATP, only oligopeptides shorter than five residues are hydrolyzed (such as succinyl-Leu-Tyr-|-NHMec, and Leu-Tyr-Leu-|-Tyr-Trp, in which cleavage of the -Tyr-|-Leu- and -Tyr-|-Trp bonds also occurs).. In terms of biological role, cleaves peptides in various proteins in a process that requires ATP hydrolysis. Has a chymotrypsin-like activity. Plays a major role in the degradation of misfolded proteins. In Eucalyptus globulus subsp. globulus (Tasmanian blue gum), this protein is ATP-dependent Clp protease proteolytic subunit.